Reading from the N-terminus, the 203-residue chain is Small ribosomal subunit protein uS4 (203 aa).

Positions 22–45 (TGKELARRPYKPGQHGPNSRGKVS) are disordered. Residues 93–156 (QRLDNVVYRL…QNISTIKEAV (64 aa)) form the S4 RNA-binding domain.

The protein belongs to the universal ribosomal protein uS4 family. In terms of assembly, part of the 30S ribosomal subunit. Contacts protein S5. The interaction surface between S4 and S5 is involved in control of translational fidelity.

One of the primary rRNA binding proteins, it binds directly to 16S rRNA where it nucleates assembly of the body of the 30S subunit. Functionally, with S5 and S12 plays an important role in translational accuracy. The sequence is that of Small ribosomal subunit protein uS4 from Enterococcus faecalis (strain ATCC 700802 / V583).